We begin with the raw amino-acid sequence, 369 residues long: Pyruvate dehydrogenase E1 component subunit alpha (369 aa).

As to quaternary structure, heterodimer of an alpha and a beta chain. It depends on thiamine diphosphate as a cofactor.

The catalysed reaction is N(6)-[(R)-lipoyl]-L-lysyl-[protein] + pyruvate + H(+) = N(6)-[(R)-S(8)-acetyldihydrolipoyl]-L-lysyl-[protein] + CO2. Functionally, the pyruvate dehydrogenase complex catalyzes the overall conversion of pyruvate to acetyl-CoA and CO(2). It contains multiple copies of three enzymatic components: pyruvate dehydrogenase (E1), dihydrolipoamide acetyltransferase (E2) and lipoamide dehydrogenase (E3). This is Pyruvate dehydrogenase E1 component subunit alpha (pdhA) from Geobacillus stearothermophilus (Bacillus stearothermophilus).